The following is a 188-amino-acid chain: dCTP deaminase (188 aa).

Residue 109-114 (KSTYAR) coordinates dCTP. E135 functions as the Proton donor/acceptor in the catalytic mechanism. Residues Q154, Y168, and Q178 each coordinate dCTP.

It belongs to the dCTP deaminase family. In terms of assembly, homotrimer.

It catalyses the reaction dCTP + H2O + H(+) = dUTP + NH4(+). It functions in the pathway pyrimidine metabolism; dUMP biosynthesis; dUMP from dCTP (dUTP route): step 1/2. Its function is as follows. Catalyzes the deamination of dCTP to dUTP. In Helicobacter pylori (strain Shi470), this protein is dCTP deaminase.